We begin with the raw amino-acid sequence, 281 residues long: MAAKMAKNVDKPLFTATFNVQASSADYATFIAGIRNKLRNPAHFSHNRPVLPPVEPNVPPSRWFHVVLKASPTSAGLTLAIRADNIYLEGFKSSDGTWWELTPGLIPGATYVGFGGTYRDLLGDTDKLTNVALGRQQLADAVTALHGRTKADKPSGPKQQQAREAVTTLLLMVNEATRFQTVSGFVAGLLHPKAVEKKSGKIGNEMKAQVNGWQDLSAALLKTDVKPPPGKSPAKFAPIEKMGVRTAVQAANTLGILLFVEVPGGLTVAKALELFHASGGK.

At alanine 2 the chain carries N-acetylalanine. Glutamate 175 is an active-site residue.

This sequence belongs to the ribosome-inactivating protein family. Type 1 RIP subfamily.

The protein localises to the cytoplasm. It carries out the reaction Endohydrolysis of the N-glycosidic bond at one specific adenosine on the 28S rRNA.. In terms of biological role, inhibits the elongation phase of protein synthesis. It inactivates fungal ribosomes even more effectively than mammalian ribosomes and is thought to function as a constitutive antifungal agent in plants. This chain is Protein synthesis inhibitor I (RIP30), found in Hordeum vulgare (Barley).